The following is a 156-amino-acid chain: MSLLIDFIDETEEVKEEYMSLIREVLEKAAQMESIEDGAEVSVTFVDNERIREINRDYRDKDQPTDVISFAMEEMGEGEMEIVGAEMPRMLGDLIISIPRAKEQAEEYGHSFDRELGFLALHGFLHLLGYDHMTEEDEKEMFGRQKEILEAFGLGR.

Zn(2+) contacts are provided by histidine 122, histidine 126, and histidine 132.

This sequence belongs to the endoribonuclease YbeY family. Requires Zn(2+) as cofactor.

Its subcellular location is the cytoplasm. In terms of biological role, single strand-specific metallo-endoribonuclease involved in late-stage 70S ribosome quality control and in maturation of the 3' terminus of the 16S rRNA. This chain is Endoribonuclease YbeY, found in Bacillus cereus (strain B4264).